We begin with the raw amino-acid sequence, 270 residues long: Phosphonoacetaldehyde hydrolase (270 aa).

Asp-11 functions as the Nucleophile in the catalytic mechanism. Residues Asp-11 and Ala-13 each contribute to the Mg(2+) site. The active-site Schiff-base intermediate with substrate is the Lys-53. Asp-187 contacts Mg(2+).

It belongs to the HAD-like hydrolase superfamily. PhnX family. In terms of assembly, homodimer. Mg(2+) is required as a cofactor.

It carries out the reaction phosphonoacetaldehyde + H2O = acetaldehyde + phosphate + H(+). Involved in phosphonate degradation. This is Phosphonoacetaldehyde hydrolase from Salmonella enteritidis PT4 (strain P125109).